Reading from the N-terminus, the 346-residue chain is NADH-ubiquinone oxidoreductase chain 2 (346 aa).

11 helical membrane-spanning segments follow: residues 3-23 (PLIFTTILMTVLLGTMIVMMS), 25-45 (HWLMIWIGFEMNLLAIIPILM), 59-79 (YFLTQATASMLLMMAIIINLM), 96-116 (IIMTSALAMKLGLTPFHFWVP), 122-142 (ISLTSGLILLTWQKLAPMSIL), 149-169 (INLNILLTMAVLSILVGGWGG), 178-198 (IMAYSSIAHMGWMTAVLVYNP), 200-220 (LTMLNMLIYIMMTLTMFMLFI), 242-262 (TLILITLLSMGGLPPLSGFMP), 274-294 (SSIILPTLMAIMALLNLYFYM), and 322-342 (ITLLPPLIVMSSLLLPLTPML).

The protein belongs to the complex I subunit 2 family. Core subunit of respiratory chain NADH dehydrogenase (Complex I) which is composed of 45 different subunits. Interacts with TMEM242.

The protein resides in the mitochondrion inner membrane. It catalyses the reaction a ubiquinone + NADH + 5 H(+)(in) = a ubiquinol + NAD(+) + 4 H(+)(out). Its function is as follows. Core subunit of the mitochondrial membrane respiratory chain NADH dehydrogenase (Complex I) which catalyzes electron transfer from NADH through the respiratory chain, using ubiquinone as an electron acceptor. Essential for the catalytic activity and assembly of complex I. The polypeptide is NADH-ubiquinone oxidoreductase chain 2 (Equus caballus (Horse)).